Here is a 179-residue protein sequence, read N- to C-terminus: Inner membrane-spanning protein YciB (179 aa).

Helical transmembrane passes span 22 to 42 (IYAATSALIVATAIVLIYSWV), 50 to 70 (MALITFVLVAVFGGLTLFFHN), 76 to 96 (WKVTVIYALFAGALLMSQWVM), 121 to 141 (LAWALFFIVCGLANIYIAFWL), and 149 to 169 (FKVFGLTALTLIFTLLSGVYI).

Belongs to the YciB family.

The protein localises to the cell inner membrane. In terms of biological role, plays a role in cell envelope biogenesis, maintenance of cell envelope integrity and membrane homeostasis. This Salmonella arizonae (strain ATCC BAA-731 / CDC346-86 / RSK2980) protein is Inner membrane-spanning protein YciB.